Consider the following 542-residue polypeptide: CTP synthase (542 aa).

The segment at 1–265 (MARYVFITGG…DDEVLAAFGI (265 aa)) is amidoligase domain. Position 13 (serine 13) interacts with CTP. Serine 13 is a binding site for UTP. ATP contacts are provided by residues 14-19 (SLGKGI) and aspartate 71. Residues aspartate 71 and glutamate 139 each coordinate Mg(2+). Residues 146 to 148 (DIE), 186 to 191 (KTKPTQ), and lysine 222 contribute to the CTP site. UTP contacts are provided by residues 186 to 191 (KTKPTQ) and lysine 222. The Glutamine amidotransferase type-1 domain occupies 291 to 541 (TIAIVGKYTG…IEAATEQSRL (251 aa)). Glycine 353 provides a ligand contact to L-glutamine. Cysteine 380 functions as the Nucleophile; for glutamine hydrolysis in the catalytic mechanism. Residues 381-384 (FGMQ), glutamate 404, and arginine 469 each bind L-glutamine. Residues histidine 514 and glutamate 516 contribute to the active site.

It belongs to the CTP synthase family. As to quaternary structure, homotetramer.

The enzyme catalyses UTP + L-glutamine + ATP + H2O = CTP + L-glutamate + ADP + phosphate + 2 H(+). It catalyses the reaction L-glutamine + H2O = L-glutamate + NH4(+). It carries out the reaction UTP + NH4(+) + ATP = CTP + ADP + phosphate + 2 H(+). The protein operates within pyrimidine metabolism; CTP biosynthesis via de novo pathway; CTP from UDP: step 2/2. With respect to regulation, allosterically activated by GTP, when glutamine is the substrate; GTP has no effect on the reaction when ammonia is the substrate. The allosteric effector GTP functions by stabilizing the protein conformation that binds the tetrahedral intermediate(s) formed during glutamine hydrolysis. Inhibited by the product CTP, via allosteric rather than competitive inhibition. Functionally, catalyzes the ATP-dependent amination of UTP to CTP with either L-glutamine or ammonia as the source of nitrogen. Regulates intracellular CTP levels through interactions with the four ribonucleotide triphosphates. The polypeptide is CTP synthase (Rhizobium johnstonii (strain DSM 114642 / LMG 32736 / 3841) (Rhizobium leguminosarum bv. viciae)).